Consider the following 324-residue polypeptide: D-erythronate dehydrogenase (324 aa).

The NAD(+) site is built by serine 125, tyrosine 149, and lysine 153. Catalysis depends on tyrosine 149, which acts as the Proton acceptor.

The protein belongs to the NAD(P)-dependent epimerase/dehydratase family.

The catalysed reaction is D-erythronate + NAD(+) = 2-dehydro-D-erythronate + NADH + H(+). In terms of biological role, catalyzes oxidation of D-erythronate to 2-oxo-tetronate. Can use either NAD(+) or NADP(+) as cosubstrate, with a preference for NAD(+). The chain is D-erythronate dehydrogenase from Cupriavidus necator (strain ATCC 17699 / DSM 428 / KCTC 22496 / NCIMB 10442 / H16 / Stanier 337) (Ralstonia eutropha).